A 793-amino-acid chain; its full sequence is Toll-like receptor 2 type-1 (793 aa).

The first 25 residues, 1–25, serve as a signal peptide directing secretion; sequence MFNQSKQKPTMKLMWQAWLIYTALA. Over 26 to 597 the chain is Extracellular; it reads AHLPEEQALR…QLSLMECHRS (572 aa). The cysteines at positions 41 and 47 are disulfide-linked. The N-linked (GlcNAc...) asparagine glycan is linked to Asn-48. LRR repeat units lie at residues 64–85, 88–109, 112–133, 136–157, 161–182, and 185–206; these read KITVLNLAHNRIKLIRTHDLQK, NLRTLLLQSNQISSIDEDSFGS, KLELLDLSNNSLAHLSPVWFGP, SLQHLRIQGNSYSDLGESSPFS, NLSSLHLGNPQFSIIRQGNFEG, and FLNTLRIDGDNLSQYEPGSLKS. Asn-120 is a glycosylation site (N-linked (GlcNAc...) asparagine). N-linked (GlcNAc...) asparagine glycosylation is found at Asn-161, Asn-195, Asn-254, and Asn-325. A disulfide bridge links Cys-362 with Cys-391. LRR repeat units lie at residues 370–391, 397–418, 423–444, 446–467, 468–486, 487–508, and 509–530; these read SLLYLDFHDNLLVNNRLGETIC, SLQTLNLSKNSLKSLKQAARYI, KLINLDISENNFGEIPDMCEWP, NLKYLNLSSTQIPKLTTCIPST, LEVLDVSANNLQDFGLQLP, FLKELYLTKNHLKTLPEATDIP, and NLVAMSISRNKLNSFSKEEFES. N-linked (GlcNAc...) asparagine glycosylation is present at Asn-402. Cys-441 and Cys-463 are joined by a disulfide. An N-linked (GlcNAc...) asparagine glycan is attached at Asn-451. One can recognise an LRRCT domain in the interval 542–596; that stretch reads NNFICSCEFLSFIHHEAGIAQVLVGWPESYICDSPLTVRGAQVGSVQLSLMECHR. Residues 598–618 traverse the membrane as a helical segment; the sequence is LLVSLICTLVFLFILILVVVG. Topologically, residues 619–793 are cytoplasmic; sequence YKYHAVWYMR…WENLKAALKS (175 aa). The TIR domain occupies 648 to 791; that stretch reads ICYDAFVSYS…MFWENLKAAL (144 aa).

It belongs to the Toll-like receptor family. In terms of assembly, binds MYD88 (via TIR domain). N-glycosylated. TLR2-1 is more heavily glycosylated than TLR2-2. As to expression, highly expressed in ovary. Detected at lower levels in heart, lung, gizzard and testis.

It is found in the membrane. Participates in the innate immune response to microbial agents. Acts via MYD88 and TRAF6, leading to NF-kappa-B activation, cytokine secretion and the inflammatory response. Does not respond to LPS and responds with less ability than TLR2-2 to mycoplasmal macrophage-activating lipopeptide-2kD (MALP-2). This Gallus gallus (Chicken) protein is Toll-like receptor 2 type-1 (TLR2-1).